The primary structure comprises 279 residues: Phycobilisome rod-core linker polypeptide CpcG1 (279 aa).

One can recognise a PBS-linker domain in the interval 11 to 189 (SSQNQRVEGY…YWRDRQTLNA (179 aa)).

This sequence belongs to the phycobilisome linker protein family. As to quaternary structure, part of the phycobilisome, a hemidiscoidal structure that is composed of two distinct substructures: a core complex and a number of rods radiating from the core.

The protein resides in the cellular thylakoid membrane. Its function is as follows. Rod-core linker protein required for attachment of phycocyanin to allophycocyanin in cores of phycobilisomes. In terms of biological role, linker polypeptides determine the state of aggregation and the location of the disk-shaped phycobiliprotein units within the phycobilisome and modulate their spectroscopic properties in order to mediate a directed and optimal energy transfer. In Nostoc sp. (strain PCC 7120 / SAG 25.82 / UTEX 2576), this protein is Phycobilisome rod-core linker polypeptide CpcG1.